The primary structure comprises 342 residues: Mitochondrial sorting homolog (342 aa).

At 1-6 the chain is on the mitochondrial intermembrane side; the sequence is MTDRNE. Residues 7 to 25 traverse the membrane as a helical segment; that stretch reads LIGVAIRVVAAAAVSFLSV. Residues 26–342 are Cytoplasmic-facing; the sequence is RYLVKYLDPN…AHLLVEETLD (317 aa). 124–131 lines the ATP pocket; it reads GPPGCGKT.

The protein belongs to the AAA ATPase family.

The protein resides in the mitochondrion outer membrane. Functionally, involved in intramitochondrial sorting of proteins. The protein is Mitochondrial sorting homolog (mspn-1) of Caenorhabditis elegans.